Reading from the N-terminus, the 215-residue chain is Adenylate kinase (215 aa).

10–15 (GAGKGT) serves as a coordination point for ATP. Residues 30 to 59 (STGDMFRAAMKNETEMGKLAKSFIDKGELV) form an NMP region. Residues Thr-31, Arg-36, 57 to 59 (ELV), 86 to 89 (GYPR), and Gln-93 each bind AMP. The LID stretch occupies residues 127–165 (GRYICRNCGATYHKIFNPTKVEGVCDVCGSHDLYQRADD). Arg-128 serves as a coordination point for ATP. Positions 131 and 134 each coordinate Zn(2+). 137–138 (TY) is a binding site for ATP. Zn(2+)-binding residues include Cys-151 and Cys-154. 2 residues coordinate AMP: Arg-162 and Arg-173. Gln-201 serves as a coordination point for ATP.

This sequence belongs to the adenylate kinase family. As to quaternary structure, monomer.

Its subcellular location is the cytoplasm. The enzyme catalyses AMP + ATP = 2 ADP. It participates in purine metabolism; AMP biosynthesis via salvage pathway; AMP from ADP: step 1/1. Its function is as follows. Catalyzes the reversible transfer of the terminal phosphate group between ATP and AMP. Plays an important role in cellular energy homeostasis and in adenine nucleotide metabolism. The sequence is that of Adenylate kinase from Lactococcus lactis subsp. lactis (strain IL1403) (Streptococcus lactis).